The primary structure comprises 140 residues: Large ribosomal subunit protein bL17 (140 aa).

Belongs to the bacterial ribosomal protein bL17 family. As to quaternary structure, part of the 50S ribosomal subunit. Contacts protein L32.

This chain is Large ribosomal subunit protein bL17, found in Ruegeria pomeroyi (strain ATCC 700808 / DSM 15171 / DSS-3) (Silicibacter pomeroyi).